A 362-amino-acid chain; its full sequence is 3-dehydroquinate synthase (362 aa).

NAD(+) is bound by residues 71–76 (DGEQYK), 105–109 (GVIGD), 129–130 (TT), Lys-142, Lys-151, and 169–172 (CLQT). The Zn(2+) site is built by Glu-184, His-247, and His-264.

Belongs to the sugar phosphate cyclases superfamily. Dehydroquinate synthase family. Co(2+) serves as cofactor. Requires Zn(2+) as cofactor. The cofactor is NAD(+).

The protein localises to the cytoplasm. The catalysed reaction is 7-phospho-2-dehydro-3-deoxy-D-arabino-heptonate = 3-dehydroquinate + phosphate. Its pathway is metabolic intermediate biosynthesis; chorismate biosynthesis; chorismate from D-erythrose 4-phosphate and phosphoenolpyruvate: step 2/7. In terms of biological role, catalyzes the conversion of 3-deoxy-D-arabino-heptulosonate 7-phosphate (DAHP) to dehydroquinate (DHQ). In Cronobacter sakazakii (strain ATCC BAA-894) (Enterobacter sakazakii), this protein is 3-dehydroquinate synthase.